The following is a 121-amino-acid chain: Large ribosomal subunit protein uL14 (121 aa).

The protein belongs to the universal ribosomal protein uL14 family. Part of the 50S ribosomal subunit. Forms a cluster with proteins L3 and L19. In the 70S ribosome, L14 and L19 interact and together make contacts with the 16S rRNA in bridges B5 and B8.

In terms of biological role, binds to 23S rRNA. Forms part of two intersubunit bridges in the 70S ribosome. This is Large ribosomal subunit protein uL14 from Hydrogenobaculum sp. (strain Y04AAS1).